We begin with the raw amino-acid sequence, 203 residues long: Holliday junction branch migration complex subunit RuvA (203 aa).

The domain I stretch occupies residues methionine 1–asparagine 64. Residues asparagine 65 to proline 142 are domain II. The segment at alanine 143–proline 154 is flexible linker. Positions alanine 155–leucine 203 are domain III.

Belongs to the RuvA family. Homotetramer. Forms an RuvA(8)-RuvB(12)-Holliday junction (HJ) complex. HJ DNA is sandwiched between 2 RuvA tetramers; dsDNA enters through RuvA and exits via RuvB. An RuvB hexamer assembles on each DNA strand where it exits the tetramer. Each RuvB hexamer is contacted by two RuvA subunits (via domain III) on 2 adjacent RuvB subunits; this complex drives branch migration. In the full resolvosome a probable DNA-RuvA(4)-RuvB(12)-RuvC(2) complex forms which resolves the HJ.

The protein resides in the cytoplasm. Functionally, the RuvA-RuvB-RuvC complex processes Holliday junction (HJ) DNA during genetic recombination and DNA repair, while the RuvA-RuvB complex plays an important role in the rescue of blocked DNA replication forks via replication fork reversal (RFR). RuvA specifically binds to HJ cruciform DNA, conferring on it an open structure. The RuvB hexamer acts as an ATP-dependent pump, pulling dsDNA into and through the RuvAB complex. HJ branch migration allows RuvC to scan DNA until it finds its consensus sequence, where it cleaves and resolves the cruciform DNA. The sequence is that of Holliday junction branch migration complex subunit RuvA from Shigella flexneri serotype 5b (strain 8401).